A 150-amino-acid chain; its full sequence is MKIARHAKILEIISEKEIETQEELAAELQKQGIDVTQATVSRDIKELRLIKVLTEDGKRYKYAPMGKVDGHITDRLMTLLSESIVSVDYAGNIIVIKTLSGTAPAAAEAIDTLNWKNIVGTLAGDNTIFVLVRNEEALQELLEKFKKLVK.

Belongs to the ArgR family.

The protein localises to the cytoplasm. Its pathway is amino-acid biosynthesis; L-arginine biosynthesis [regulation]. Functionally, regulates arginine biosynthesis genes. This chain is Arginine repressor, found in Thermoanaerobacter sp. (strain X514).